The chain runs to 377 residues: Carboxynorspermidine/carboxyspermidine decarboxylase (377 aa).

K41 carries the post-translational modification N6-(pyridoxal phosphate)lysine. Positions 238 and 274 each coordinate substrate.

Belongs to the Orn/Lys/Arg decarboxylase class-II family. NspC subfamily. In terms of assembly, homodimer. Pyridoxal 5'-phosphate is required as a cofactor.

It is found in the cytoplasm. It catalyses the reaction carboxynorspermidine + H(+) = norspermidine + CO2. The catalysed reaction is carboxyspermidine + H(+) = spermidine + CO2. Its activity is regulated as follows. Dithiothreitol greatly stimulates activity, maximum stimulation being at 5-20 mM dithiothreitol concentration. Fe(3+), Fe(2+) and Mn(2+) severely inhibit activity (88%, 82% and 50%, respectively), whereas Zn(2+) has a slightly inhibitory effect (23%) and Mg(2+), Ca(2+), Cu(2+) and Cu(+) have no effect. Functionally, catalyzes the decarboxylation of carboxynorspermidine and carboxyspermidine. 2,3-diaminopropionic acid, 2,4-diaminobutyric acid, L-ornithine or L-lysine cannot serve as substrates. The polypeptide is Carboxynorspermidine/carboxyspermidine decarboxylase (Vibrio alginolyticus).